We begin with the raw amino-acid sequence, 93 residues long: Beta-defensin 128 (93 aa).

An N-terminal signal peptide occupies residues 1–18 (MKLFLVLIILLFEVLTDG). Disulfide bonds link C24-C52, C32-C46, and C36-C53.

The protein belongs to the beta-defensin family.

The protein localises to the secreted. In terms of biological role, has antibacterial activity. In Macaca fascicularis (Crab-eating macaque), this protein is Beta-defensin 128 (DEFB128).